The sequence spans 434 residues: Monodehydroascorbate reductase, seedling isozyme (434 aa).

FAD contacts are provided by residues 13–16 (GGVA), E40, R47, K52, I95, and 146–147 (RE). NAD(+) is bound by residues 171 to 177 (GGYIGLE), E195, R201, and G260. 173 to 177 (YIGLE) lines the NADP(+) pocket. NADP(+) is bound by residues R201 and G260. D297 is a binding site for FAD. 313-314 (EH) is a binding site for NAD(+). NADP(+) is bound at residue 313 to 314 (EH). An FAD-binding site is contributed by V315. R319 contributes to the L-ascorbate binding site. Y348 is a binding site for FAD. Residue Y348 coordinates NAD(+). Residue Y348 participates in NADP(+) binding. R350 contributes to the L-ascorbate binding site.

The protein belongs to the FAD-dependent oxidoreductase family. FAD serves as cofactor.

Its subcellular location is the cytoplasm. It catalyses the reaction 2 monodehydro-L-ascorbate radical + NADH + H(+) = 2 L-ascorbate + NAD(+). Its function is as follows. Catalyzes the conversion of monodehydroascorbate to ascorbate, oxidizing NADH in the process. This chain is Monodehydroascorbate reductase, seedling isozyme, found in Cucumis sativus (Cucumber).